A 151-amino-acid chain; its full sequence is UPF0098 protein MTH_273 (151 aa).

This sequence belongs to the UPF0098 family.

The sequence is that of UPF0098 protein MTH_273 from Methanothermobacter thermautotrophicus (strain ATCC 29096 / DSM 1053 / JCM 10044 / NBRC 100330 / Delta H) (Methanobacterium thermoautotrophicum).